Here is a 326-residue protein sequence, read N- to C-terminus: Glycerol-3-phosphate dehydrogenase [NAD(P)+] (326 aa).

Positions 10, 11, 31, and 108 each coordinate NADPH. Lysine 108, glycine 136, and serine 138 together coordinate sn-glycerol 3-phosphate. Alanine 140 contacts NADPH. Sn-glycerol 3-phosphate-binding residues include lysine 191, aspartate 246, serine 256, arginine 257, and asparagine 258. Lysine 191 (proton acceptor) is an active-site residue. Arginine 257 provides a ligand contact to NADPH. 2 residues coordinate NADPH: isoleucine 281 and glutamate 283.

It belongs to the NAD-dependent glycerol-3-phosphate dehydrogenase family.

The protein resides in the cytoplasm. It catalyses the reaction sn-glycerol 3-phosphate + NAD(+) = dihydroxyacetone phosphate + NADH + H(+). The catalysed reaction is sn-glycerol 3-phosphate + NADP(+) = dihydroxyacetone phosphate + NADPH + H(+). It participates in membrane lipid metabolism; glycerophospholipid metabolism. Its function is as follows. Catalyzes the reduction of the glycolytic intermediate dihydroxyacetone phosphate (DHAP) to sn-glycerol 3-phosphate (G3P), the key precursor for phospholipid synthesis. The polypeptide is Glycerol-3-phosphate dehydrogenase [NAD(P)+] (Ehrlichia chaffeensis (strain ATCC CRL-10679 / Arkansas)).